Reading from the N-terminus, the 327-residue chain is Xylosidase/arabinosidase 43A (327 aa).

Residue Asp-12 is the Proton acceptor of the active site. Catalysis depends on Glu-228, which acts as the Proton donor.

The protein belongs to the glycosyl hydrolase 43 family.

The protein localises to the secreted. The enzyme catalyses Hydrolysis of (1-&gt;4)-beta-D-xylans, to remove successive D-xylose residues from the non-reducing termini.. The catalysed reaction is Hydrolysis of terminal non-reducing alpha-L-arabinofuranoside residues in alpha-L-arabinosides.. Its activity is regulated as follows. Activity is inhibited by Ag(+), Li(+), Pb(2+), Cu(2+), Cr(3+), Co(3+), Fe(3+), Ni(2+), Mg(2+), Zn(2+), EDTA and SDS; but not by Mn(2+), Ca(2+) and beta-mercaptoethanol. In terms of biological role, bifunctional beta-xylosidase/alpha-L-arabinosidases with a low level of xylanase activity. Is most active on 4-nitrophenyl beta-D-xylopyranoside (pNPX) (defined as 100%), moderate on p-nitrophenyl-alpha-L-arabinofuranoside (pNPA) (23.7%), and weak on beechwood xylan (15.9%) and birchwood xylan (15.2%). Is able to attack xylooligosacchardies with degrees of polymerisation of 2-5, releasing the amounts of reducing sugars in the order of xylopentose &gt; xylotetraose &gt; xylotriose &gt; xylobiose, i.e. the rate of xylose released from xylooligosacchardies increased with the chain length. No activity is detected in the presence of carboxymethyl cellulose-sodium (CMC-Na), sugar beet arabinan, AZCL-arabinan (debranched), 4-nitrophenyl a-D - galactopyranoside, 2-nitrophenyl beta-D-galactopyranoside, and 4-nitrophenyl alpha-D-glucopyranoside. This chain is Xylosidase/arabinosidase 43A, found in Humicola insolens (Soft-rot fungus).